The sequence spans 328 residues: Phosphate acyltransferase (328 aa).

Belongs to the PlsX family. As to quaternary structure, homodimer. Probably interacts with PlsY.

It is found in the cytoplasm. It carries out the reaction a fatty acyl-[ACP] + phosphate = an acyl phosphate + holo-[ACP]. Its pathway is lipid metabolism; phospholipid metabolism. In terms of biological role, catalyzes the reversible formation of acyl-phosphate (acyl-PO(4)) from acyl-[acyl-carrier-protein] (acyl-ACP). This enzyme utilizes acyl-ACP as fatty acyl donor, but not acyl-CoA. The protein is Phosphate acyltransferase of Campylobacter jejuni subsp. jejuni serotype O:2 (strain ATCC 700819 / NCTC 11168).